The primary structure comprises 304 residues: Quorum-quenching protein AidA (304 aa).

It belongs to the AB hydrolase superfamily.

Involved in quorum quenching (QQ). Inhibits motility and biofilm formation. Could contribute in bacterial competition, as it is capable of hydrolyzing the signaling molecules that mediate interspecies communication. The chain is Quorum-quenching protein AidA from Acinetobacter baumannii (strain MDR-ZJ06).